Here is a 409-residue protein sequence, read N- to C-terminus: Translation initiation factor 2 subunit gamma (409 aa).

Positions 6–203 (QPEVNIGLVG…AVQSEIPTPE (198 aa)) constitute a tr-type G domain. The tract at residues 15–22 (GHVDHGKT) is G1. Mg(2+) is bound by residues Asp-18, Thr-22, Gly-43, and Ser-45. 18–23 (DHGKTT) serves as a coordination point for GTP. The interval 43–47 (GISIR) is G2. Positions 90 to 93 (DAPG) are G3. GTP is bound by residues 146-149 (NKVD) and 181-183 (SAG). A G4 region spans residues 146–149 (NKVD). Residues 181–183 (SAG) are G5.

This sequence belongs to the TRAFAC class translation factor GTPase superfamily. Classic translation factor GTPase family. EIF2G subfamily. In terms of assembly, heterotrimer composed of an alpha, a beta and a gamma chain. Mg(2+) serves as cofactor.

The catalysed reaction is GTP + H2O = GDP + phosphate + H(+). In terms of biological role, eIF-2 functions in the early steps of protein synthesis by forming a ternary complex with GTP and initiator tRNA. The polypeptide is Translation initiation factor 2 subunit gamma (Haloarcula marismortui (strain ATCC 43049 / DSM 3752 / JCM 8966 / VKM B-1809) (Halobacterium marismortui)).